The sequence spans 158 residues: 6,7-dimethyl-8-ribityllumazine synthase (158 aa).

5-amino-6-(D-ribitylamino)uracil is bound by residues Phe22, 57 to 59 (AYE), and 84 to 86 (TVI). A (2S)-2-hydroxy-3-oxobutyl phosphate-binding site is contributed by 89–90 (GT). The active-site Proton donor is the His92. Phe117 is a binding site for 5-amino-6-(D-ribitylamino)uracil. A (2S)-2-hydroxy-3-oxobutyl phosphate-binding site is contributed by Arg131.

This sequence belongs to the DMRL synthase family. As to quaternary structure, forms an icosahedral capsid composed of 60 subunits, arranged as a dodecamer of pentamers.

The enzyme catalyses (2S)-2-hydroxy-3-oxobutyl phosphate + 5-amino-6-(D-ribitylamino)uracil = 6,7-dimethyl-8-(1-D-ribityl)lumazine + phosphate + 2 H2O + H(+). It participates in cofactor biosynthesis; riboflavin biosynthesis; riboflavin from 2-hydroxy-3-oxobutyl phosphate and 5-amino-6-(D-ribitylamino)uracil: step 1/2. Its function is as follows. Catalyzes the formation of 6,7-dimethyl-8-ribityllumazine by condensation of 5-amino-6-(D-ribitylamino)uracil with 3,4-dihydroxy-2-butanone 4-phosphate. This is the penultimate step in the biosynthesis of riboflavin. The protein is 6,7-dimethyl-8-ribityllumazine synthase of Pectobacterium carotovorum subsp. carotovorum (strain PC1).